Consider the following 344-residue polypeptide: Acetylpolyamine amidohydrolase 2 (344 aa).

His-159 acts as the Proton donor/acceptor in catalysis. Zn(2+) contacts are provided by Asp-195, His-197, and Asp-284.

The protein belongs to the histone deacetylase family. As to quaternary structure, homodimer. Zn(2+) serves as cofactor.

The catalysed reaction is N-acetylputrescine + H2O = putrescine + acetate. It catalyses the reaction N-acetylcadaverine + H2O = cadaverine + acetate. Its pathway is amine and polyamine metabolism. Its function is as follows. Catalyzes the deacetylation of acetylated polyamines such as N-acetylputrescine and N-acetylcadaverine. Plays an important role in the metabolism of acetylated polyamines in P.aeruginosa. Is involved in the degradation pathways of N-acetylputrescine and N-acetylcadaverine, that allow P.aeruginosa to utilize these acetylpolyamines as a carbon source under glucose starvation. Shows nearly no activity against N(1)-acetylspermine and N(1)-acetylspermidine. Can also hydrolyze artificial trifluoroacetylated lysine-derivative, and to a lesser extent, acetylated lysine-derivative. This Pseudomonas aeruginosa (strain ATCC 15692 / DSM 22644 / CIP 104116 / JCM 14847 / LMG 12228 / 1C / PRS 101 / PAO1) protein is Acetylpolyamine amidohydrolase 2.